Consider the following 243-residue polypeptide: Probable aquaporin SIP1-2 (243 aa).

Transmembrane regions (helical) follow at residues 12–32 (VITF…AAIV) and 42–62 (WAPL…FTVI). The NPA 1 signature appears at 72 to 74 (NPC). The next 3 helical transmembrane spans lie at 90-110 (FSLA…AITI), 135-155 (GAIS…LIIL), and 162-182 (LAKT…GSKF). Residues 188 to 190 (NPA) carry the NPA 2 motif. The chain crosses the membrane as a helical span at residues 210 to 230 (VYWISSYTGAILSAMLFRIIF).

It belongs to the MIP/aquaporin (TC 1.A.8) family. SIP (TC 1.A.8.10) subfamily. Expressed in roots and above ground. Expressed in elongating regions of the root tips, cotyledons, minor veins and hydathode cells of the rosette leaves. Weakly expressed in vascular tissues of the flower petals, filaments of stamens, upper part of the styles and receptacles of the siliques.

It localises to the endoplasmic reticulum membrane. Water channel required to facilitate the transport of water across cell membrane. The chain is Probable aquaporin SIP1-2 (SIP1-2) from Arabidopsis thaliana (Mouse-ear cress).